The chain runs to 225 residues: Protein-L-isoaspartate O-methyltransferase (225 aa).

The active site involves S75.

It belongs to the methyltransferase superfamily. L-isoaspartyl/D-aspartyl protein methyltransferase family.

The protein localises to the cytoplasm. It carries out the reaction [protein]-L-isoaspartate + S-adenosyl-L-methionine = [protein]-L-isoaspartate alpha-methyl ester + S-adenosyl-L-homocysteine. Catalyzes the methyl esterification of L-isoaspartyl residues in peptides and proteins that result from spontaneous decomposition of normal L-aspartyl and L-asparaginyl residues. It plays a role in the repair and/or degradation of damaged proteins. In Xylella fastidiosa (strain 9a5c), this protein is Protein-L-isoaspartate O-methyltransferase.